A 153-amino-acid polypeptide reads, in one-letter code: Probable phospholipase A2 homolog 2 (153 aa).

The first 25 residues, 1 to 25, serve as a signal peptide directing secretion; it reads MRFFLKLAPRCSVLLLLLLVTASRG. Intrachain disulfides connect Cys42–Cys70, Cys46–Cys76, Cys51–Cys123, Cys63–Cys83, Cys82–Cys109, and Cys89–Cys102. Ca(2+)-binding residues include Tyr62, Gly64, and Tyr67. Residue His86 is part of the active site. Residue Asp87 coordinates Ca(2+).

This sequence belongs to the phospholipase A2 family. The cofactor is Ca(2+).

Its subcellular location is the secreted. It catalyses the reaction a 1,2-diacyl-sn-glycero-3-phosphocholine + H2O = a 1-acyl-sn-glycero-3-phosphocholine + a fatty acid + H(+). Its function is as follows. PA2 catalyzes the calcium-dependent hydrolysis of the 2-acyl groups in 3-sn-phosphoglycerides. Releases lysophospholipids (LPLs) and free fatty acids (FFAs) from membrane phospholipids in response to hormones and other external stimuli. The chain is Probable phospholipase A2 homolog 2 (PLA2-II) from Oryza sativa subsp. japonica (Rice).